The primary structure comprises 198 residues: Holliday junction branch migration complex subunit RuvA (198 aa).

A domain I region spans residues 1–63 (MYDYIKGQLT…EDAHLLFGFH (63 aa)). A domain II region spans residues 64 to 142 (TEDEKDVFLK…EAPQETGHTK (79 aa)). The interval 143–147 (ARSNK) is flexible linker. Residues 148–198 (AGNTQLDEAIEALLALGYKAKELKKIRAFFEGTSETAEQYIKSALKLLMKG) form a domain III region.

The protein belongs to the RuvA family. In terms of assembly, homotetramer. Forms an RuvA(8)-RuvB(12)-Holliday junction (HJ) complex. HJ DNA is sandwiched between 2 RuvA tetramers; dsDNA enters through RuvA and exits via RuvB. An RuvB hexamer assembles on each DNA strand where it exits the tetramer. Each RuvB hexamer is contacted by two RuvA subunits (via domain III) on 2 adjacent RuvB subunits; this complex drives branch migration. In the full resolvosome a probable DNA-RuvA(4)-RuvB(12)-RuvC(2) complex forms which resolves the HJ.

It localises to the cytoplasm. The RuvA-RuvB-RuvC complex processes Holliday junction (HJ) DNA during genetic recombination and DNA repair, while the RuvA-RuvB complex plays an important role in the rescue of blocked DNA replication forks via replication fork reversal (RFR). RuvA specifically binds to HJ cruciform DNA, conferring on it an open structure. The RuvB hexamer acts as an ATP-dependent pump, pulling dsDNA into and through the RuvAB complex. HJ branch migration allows RuvC to scan DNA until it finds its consensus sequence, where it cleaves and resolves the cruciform DNA. The sequence is that of Holliday junction branch migration complex subunit RuvA from Streptococcus pyogenes serotype M1.